The sequence spans 577 residues: ATP-dependent zinc metalloprotease FtsH (577 aa).

Residues 1–3 (MKK) are Cytoplasmic-facing. Residues 4–24 (LYWIILIAVVLACSGILMSLH) form a helical membrane-spanning segment. The Extracellular segment spans residues 25 to 98 (LSVTKEEMTY…IKVDNSDSYS (74 aa)). Residues 99 to 119 (ATKVIQIILIITVGTGVFLFI) form a helical membrane-spanning segment. Residues 120–577 (RTSGGKDKPL…IDRICLKEAV (458 aa)) are Cytoplasmic-facing. 186–193 (GPPGTGKT) contributes to the ATP binding site. A Zn(2+)-binding site is contributed by His409. Glu410 is a catalytic residue. Zn(2+)-binding residues include His413 and Asp487.

In the central section; belongs to the AAA ATPase family. The protein in the C-terminal section; belongs to the peptidase M41 family. In terms of assembly, homohexamer. The cofactor is Zn(2+).

It localises to the cell membrane. Acts as a processive, ATP-dependent zinc metallopeptidase for both cytoplasmic and membrane proteins. Plays a role in the quality control of integral membrane proteins. In Lachnoclostridium phytofermentans (strain ATCC 700394 / DSM 18823 / ISDg) (Clostridium phytofermentans), this protein is ATP-dependent zinc metalloprotease FtsH.